The sequence spans 205 residues: SCO2-like protein RP587 (205 aa).

Residues Cys82, Cys86, and His172 each contribute to the Cu cation site.

It belongs to the SCO1/2 family.

In Rickettsia prowazekii (strain Madrid E), this protein is SCO2-like protein RP587.